The sequence spans 561 residues: Asparagine synthetase [glutamine-hydrolyzing] (561 aa).

The active-site For GATase activity is the Cys-2. The Glutamine amidotransferase type-2 domain occupies 2–191; it reads CGIWALFGSD…PGHYEVLDLK (190 aa). L-glutamine contacts are provided by residues 49–53, 75–77, and Asp-97; these read RLAVV and NGE. Residues 213-536 form the Asparagine synthetase domain; the sequence is HAIYDSVEKL…PGRADWLTHY (324 aa). ATP is bound by residues Leu-256, Ile-288, and 363–364; that span reads SG. Lys-385 carries the N6-acetyllysine modification. Position 545 is a phosphothreonine (Thr-545). The residue at position 557 (Ser-557) is a Phosphoserine.

The catalysed reaction is L-aspartate + L-glutamine + ATP + H2O = L-asparagine + L-glutamate + AMP + diphosphate + H(+). It functions in the pathway amino-acid biosynthesis; L-asparagine biosynthesis; L-asparagine from L-aspartate (L-Gln route): step 1/1. This chain is Asparagine synthetase [glutamine-hydrolyzing] (Asns), found in Rattus norvegicus (Rat).